The chain runs to 293 residues: Bifunctional protein FolD (293 aa).

NADP(+) is bound by residues glycine 165–serine 167, serine 190, and isoleucine 231.

It belongs to the tetrahydrofolate dehydrogenase/cyclohydrolase family. Homodimer.

The enzyme catalyses (6R)-5,10-methylene-5,6,7,8-tetrahydrofolate + NADP(+) = (6R)-5,10-methenyltetrahydrofolate + NADPH. It catalyses the reaction (6R)-5,10-methenyltetrahydrofolate + H2O = (6R)-10-formyltetrahydrofolate + H(+). It functions in the pathway one-carbon metabolism; tetrahydrofolate interconversion. In terms of biological role, catalyzes the oxidation of 5,10-methylenetetrahydrofolate to 5,10-methenyltetrahydrofolate and then the hydrolysis of 5,10-methenyltetrahydrofolate to 10-formyltetrahydrofolate. This is Bifunctional protein FolD from Parasynechococcus marenigrum (strain WH8102).